A 278-amino-acid polypeptide reads, in one-letter code: Phosphatidylglycerol--prolipoprotein diacylglyceryl transferase (278 aa).

4 helical membrane-spanning segments follow: residues 19 to 39 (WYGI…INEG), 49 to 69 (FIDF…IYYV), 83 to 103 (IIAI…GLIV), and 112 to 132 (MLPP…AQVI). R134 provides a ligand contact to a 1,2-diacyl-sn-glycero-3-phospho-(1'-sn-glycerol). 3 helical membrane-spanning segments follow: residues 174 to 194 (QPTY…ILSL), 204 to 224 (GEVF…VEGM), and 235 to 255 (IRVS…LWVY).

This sequence belongs to the Lgt family.

Its subcellular location is the cell membrane. It catalyses the reaction L-cysteinyl-[prolipoprotein] + a 1,2-diacyl-sn-glycero-3-phospho-(1'-sn-glycerol) = an S-1,2-diacyl-sn-glyceryl-L-cysteinyl-[prolipoprotein] + sn-glycerol 1-phosphate + H(+). It participates in protein modification; lipoprotein biosynthesis (diacylglyceryl transfer). In terms of biological role, catalyzes the transfer of the diacylglyceryl group from phosphatidylglycerol to the sulfhydryl group of the N-terminal cysteine of a prolipoprotein, the first step in the formation of mature lipoproteins. In Lactobacillus gasseri (strain ATCC 33323 / DSM 20243 / BCRC 14619 / CIP 102991 / JCM 1131 / KCTC 3163 / NCIMB 11718 / NCTC 13722 / AM63), this protein is Phosphatidylglycerol--prolipoprotein diacylglyceryl transferase.